Reading from the N-terminus, the 215-residue chain is Cytochrome b6 (215 aa).

Residues 32-52 form a helical membrane-spanning segment; the sequence is IFYCLGGITLTCFLVQVATGF. Cys35 is a heme c binding site. Heme b contacts are provided by His86 and His100. The next 3 helical transmembrane spans lie at 90-110, 116-136, and 186-206; these read ASMM…TGGF, LTWV…VTGY, and LHTF…FLMI. Heme b-binding residues include His187 and His202.

The protein belongs to the cytochrome b family. PetB subfamily. As to quaternary structure, the 4 large subunits of the cytochrome b6-f complex are cytochrome b6, subunit IV (17 kDa polypeptide, PetD), cytochrome f and the Rieske protein, while the 4 small subunits are PetG, PetL, PetM and PetN. The complex functions as a dimer. Heme b is required as a cofactor. The cofactor is heme c.

It is found in the plastid. The protein resides in the chloroplast thylakoid membrane. Its function is as follows. Component of the cytochrome b6-f complex, which mediates electron transfer between photosystem II (PSII) and photosystem I (PSI), cyclic electron flow around PSI, and state transitions. This Morus indica (Mulberry) protein is Cytochrome b6.